The primary structure comprises 122 residues: Large ribosomal subunit protein uL14 (122 aa).

It belongs to the universal ribosomal protein uL14 family. Part of the 50S ribosomal subunit. Forms a cluster with proteins L3 and L19. In the 70S ribosome, L14 and L19 interact and together make contacts with the 16S rRNA in bridges B5 and B8.

Its function is as follows. Binds to 23S rRNA. Forms part of two intersubunit bridges in the 70S ribosome. The protein is Large ribosomal subunit protein uL14 of Picosynechococcus sp. (strain ATCC 27264 / PCC 7002 / PR-6) (Agmenellum quadruplicatum).